The chain runs to 373 residues: Dual-specificity RNA methyltransferase RlmN (373 aa).

Glu101 functions as the Proton acceptor in the catalytic mechanism. The 244-residue stretch at Glu107–Asp350 folds into the Radical SAM core domain. Cys114 and Cys355 are disulfide-bonded. 3 residues coordinate [4Fe-4S] cluster: Cys121, Cys125, and Cys128. Residues Gly179–Glu180, Ser211, Ser233–His235, and Asn312 each bind S-adenosyl-L-methionine. Cys355 acts as the S-methylcysteine intermediate in catalysis.

This sequence belongs to the radical SAM superfamily. RlmN family. [4Fe-4S] cluster serves as cofactor.

It localises to the cytoplasm. The catalysed reaction is adenosine(2503) in 23S rRNA + 2 reduced [2Fe-2S]-[ferredoxin] + 2 S-adenosyl-L-methionine = 2-methyladenosine(2503) in 23S rRNA + 5'-deoxyadenosine + L-methionine + 2 oxidized [2Fe-2S]-[ferredoxin] + S-adenosyl-L-homocysteine. The enzyme catalyses adenosine(37) in tRNA + 2 reduced [2Fe-2S]-[ferredoxin] + 2 S-adenosyl-L-methionine = 2-methyladenosine(37) in tRNA + 5'-deoxyadenosine + L-methionine + 2 oxidized [2Fe-2S]-[ferredoxin] + S-adenosyl-L-homocysteine. Its function is as follows. Specifically methylates position 2 of adenine 2503 in 23S rRNA and position 2 of adenine 37 in tRNAs. m2A2503 modification seems to play a crucial role in the proofreading step occurring at the peptidyl transferase center and thus would serve to optimize ribosomal fidelity. The sequence is that of Dual-specificity RNA methyltransferase RlmN from Blochmanniella pennsylvanica (strain BPEN).